The primary structure comprises 681 residues: Calpain-C (681 aa).

The region spanning 18–331 (LWEDPDFPAV…FSTMEVVYLD (314 aa)) is the Calpain catalytic domain. A domain III region spans residues 332-481 (TETSNDEEML…ILGTGSFRLS (150 aa)). The segment at 482–514 (CLETQTMILLDPFPALKSTDAERCGGPKVKSVC) is linker. A domain IV region spans residues 515–681 (QYEPVYMQLA…HDWIKSILSC (167 aa)). The 36-residue stretch at 552–587 (ANIDICRQVIALQDRSGSGRITFQQFKTFMVNLKSW) folds into the EF-hand domain. Asp565, Ser567, Ser569, and Arg571 together coordinate Ca(2+).

Belongs to the peptidase C2 family. As to expression, localized to the salivary glands in the larva.

The protein resides in the cytoplasm. In terms of biological role, not known; does not seem to have protease activity. The chain is Calpain-C from Drosophila melanogaster (Fruit fly).